We begin with the raw amino-acid sequence, 129 residues long: Small ribosomal subunit protein uS13 (129 aa).

A compositionally biased stretch (basic residues) spans His92–Arg114. The segment at His92–Lys129 is disordered.

Belongs to the universal ribosomal protein uS13 family. Part of the 30S ribosomal subunit. Forms a loose heterodimer with protein S19. Forms two bridges to the 50S subunit in the 70S ribosome.

In terms of biological role, located at the top of the head of the 30S subunit, it contacts several helices of the 16S rRNA. In the 70S ribosome it contacts the 23S rRNA (bridge B1a) and protein L5 of the 50S subunit (bridge B1b), connecting the 2 subunits; these bridges are implicated in subunit movement. Contacts the tRNAs in the A and P-sites. The polypeptide is Small ribosomal subunit protein uS13 (Dehalococcoides mccartyi (strain ATCC BAA-2266 / KCTC 15142 / 195) (Dehalococcoides ethenogenes (strain 195))).